We begin with the raw amino-acid sequence, 652 residues long: UvrABC system protein C (652 aa).

In terms of domain architecture, GIY-YIG spans 19–96 (KTSGVYLWKD…IKKHKPRYNI (78 aa)). One can recognise a UVR domain in the interval 203–238 (EDVSGTLKEKMKEAAEKKEFEKAARLRDGIQAVYAL).

Belongs to the UvrC family. As to quaternary structure, interacts with UvrB in an incision complex.

The protein resides in the cytoplasm. In terms of biological role, the UvrABC repair system catalyzes the recognition and processing of DNA lesions. UvrC both incises the 5' and 3' sides of the lesion. The N-terminal half is responsible for the 3' incision and the C-terminal half is responsible for the 5' incision. The protein is UvrABC system protein C of Treponema denticola (strain ATCC 35405 / DSM 14222 / CIP 103919 / JCM 8153 / KCTC 15104).